The sequence spans 419 residues: Maltoporin 2 (419 aa).

An N-terminal signal peptide occupies residues 1 to 23 (MKTSLRTLSVALAAALVSPSVLA).

Belongs to the porin LamB (TC 1.B.3) family. In terms of assembly, homotrimer formed of three 18-stranded antiparallel beta-barrels, containing three independent channels.

It is found in the cell outer membrane. It carries out the reaction beta-maltose(in) = beta-maltose(out). Involved in the transport of maltose and maltodextrins. The chain is Maltoporin 2 from Yersinia pestis bv. Antiqua (strain Antiqua).